Consider the following 316-residue polypeptide: Probable cell division protein WhiA (316 aa).

Residues 275–309 (TLKELGEMVSGGKISKSGINHRLRKIDEIAEKLRA) constitute a DNA-binding region (H-T-H motif).

Belongs to the WhiA family.

In terms of biological role, involved in cell division and chromosome segregation. In Bacillus cereus (strain B4264), this protein is Probable cell division protein WhiA.